The primary structure comprises 330 residues: MNLISLFSGAGGLDLGFQKAGFRIICANEYDKSIWKTYESNHSAKLIKGDISKISSDEFPKCDGIIGGPPCQSWSEGGSLRGIDDPRGKLFYEYIRILKQKKPIFFLAENVKGMMAQRHNKAVQEFIQEFDNAGYDVHIILLNANDYGVAQDRKRVFYIGFRKELNINYLPPIPHLIKPTFKDVIWDLKDNPIPALDKNKTNGNKCIYPNHEYFIGSYSTIFMSRNRVRQWNEPAFTVQASGRQCQLHPQAPVMLKVSKNLNKFVEGKEHLYRRLTVRECARVQGFPDDFIFHYESLNDGYKMIGNAVPVNLAYEIAKTIKSALEICKGN.

In terms of domain architecture, SAM-dependent MTase C5-type spans 1–327; it reads MNLISLFSGA…KTIKSALEIC (327 aa). ATP contacts are provided by residues E29 and 50-51; that span reads DI. C71 is an active-site residue. N260 is an ATP binding site.

This sequence belongs to the class I-like SAM-binding methyltransferase superfamily. C5-methyltransferase family. Monomer.

The catalysed reaction is a 2'-deoxycytidine in DNA + S-adenosyl-L-methionine = a 5-methyl-2'-deoxycytidine in DNA + S-adenosyl-L-homocysteine + H(+). Functionally, a methylase, recognizes the double-stranded sequence 5'-GGCC-3', methylates C-3 on both strands, and protects the DNA from cleavage by the HaeIII endonuclease. The polypeptide is Type II methyltransferase M.HaeIII (haeIIIM) (Haemophilus aegyptius).